Consider the following 904-residue polypeptide: Exo-beta-D-glucosaminidase (904 aa).

Residues 1–32 form the signal peptide; it reads MFHRPASVRRFVTTAVALGLLSTLSTGARAGA. The interval 28 to 49 is disordered; sequence ARAGARTHEPPPRPTTVSSTAG. Asp476 (proton donor) is an active-site residue. The Nucleophile role is filled by Glu545. Positions 813-828 are enriched in low complexity; that stretch reads STTAGTDGASTTTVTV. The disordered stretch occupies residues 813–833; the sequence is STTAGTDGASTTTVTVRNTGS.

Belongs to the glycosyl hydrolase 2 family. In terms of assembly, monomer.

The protein resides in the secreted. It catalyses the reaction Hydrolysis of chitosan or chitosan oligosaccharides to remove successive D-glucosamine residues from the non-reducing termini.. Hydrolyzes chitosan and chitooligosaccharides with retention of anomeric configuration. Has no beta-mannosidase activity. The sequence is that of Exo-beta-D-glucosaminidase from Streptomyces avermitilis (strain ATCC 31267 / DSM 46492 / JCM 5070 / NBRC 14893 / NCIMB 12804 / NRRL 8165 / MA-4680).